Consider the following 215-residue polypeptide: Large ribosomal subunit protein uL16 (215 aa).

The segment at 1-22 (MGRRPARCYRQPKGKPYPKSRY) is disordered.

Belongs to the universal ribosomal protein uL16 family.

This chain is Large ribosomal subunit protein uL16 (RPL10), found in Tetrahymena thermophila (strain SB210).